A 346-amino-acid polypeptide reads, in one-letter code: E3 ubiquitin-protein ligase RNF146-A (346 aa).

The RING-type zinc-finger motif lies at 37–75; it reads CAICLQTCVHPVSLPCKHVFCYLCVKGASWLGKRCALCR. One can recognise a WWE domain in the interval 91–167; it reads PELKAASRGN…EHGRRRKIKR (77 aa). Disordered stretches follow at residues 195-240 and 256-301; these read SSAD…GTSL and ERSH…ALVA. Over residues 202–216 the composition is skewed to low complexity; that stretch reads SVPAQSGASVQSSSV. A compositionally biased stretch (acidic residues) spans 281-295; the sequence is SIEETESDASSDSED.

Interacts with poly-ADP-ribosylated AXIN1, AXIN2, BLZF1 and CASC3. Ubiquitinated; autoubiquitinated. Autoubiquitination is enhanced upon poly(ADP-ribose)-binding.

It is found in the cytoplasm. Its subcellular location is the cytosol. The enzyme catalyses S-ubiquitinyl-[E2 ubiquitin-conjugating enzyme]-L-cysteine + [acceptor protein]-L-lysine = [E2 ubiquitin-conjugating enzyme]-L-cysteine + N(6)-ubiquitinyl-[acceptor protein]-L-lysine.. The protein operates within protein modification; protein ubiquitination. E3 ubiquitin-protein ligase that specifically binds poly-ADP-ribosylated proteins and mediates their ubiquitination and subsequent degradation. Acts as an activator of the Wnt signaling pathway by mediating the ubiquitination of poly-ADP-ribosylated AXIN1 and AXIN2, 2 key components of the beta-catenin destruction complex. Acts in cooperation with tankyrase proteins (TNKS and TNKS2), which mediate poly-ADP-ribosylation of target proteins AXIN1, AXIN2, BLZF1, CASC3, TNKS and TNKS2. Recognizes and binds tankyrase-dependent poly-ADP-ribosylated proteins via its WWE domain and mediates their ubiquitination. The protein is E3 ubiquitin-protein ligase RNF146-A (RNF146A) of Bos taurus (Bovine).